Reading from the N-terminus, the 273-residue chain is Aliphatic sulfonates import ATP-binding protein SsuB 2 (273 aa).

Residues 17–241 (LLDLRITRKL…PRDRRDPTLA (225 aa)) enclose the ABC transporter domain. 50–57 (GPSGCGKS) contacts ATP.

The protein belongs to the ABC transporter superfamily. Aliphatic sulfonates importer (TC 3.A.1.17.2) family. The complex is composed of two ATP-binding proteins (SsuB), two transmembrane proteins (SsuC) and a solute-binding protein (SsuA).

Its subcellular location is the cell inner membrane. The catalysed reaction is ATP + H2O + aliphatic sulfonate-[sulfonate-binding protein]Side 1 = ADP + phosphate + aliphatic sulfonateSide 2 + [sulfonate-binding protein]Side 1.. Part of the ABC transporter complex SsuABC involved in aliphatic sulfonates import. Responsible for energy coupling to the transport system. In Burkholderia lata (strain ATCC 17760 / DSM 23089 / LMG 22485 / NCIMB 9086 / R18194 / 383), this protein is Aliphatic sulfonates import ATP-binding protein SsuB 2.